The following is a 231-amino-acid chain: Dihydropteridine reductase (231 aa).

6–30 (LVLGGSGALGAEVVKFFKSKSWNTI) contributes to the NADP(+) binding site. Tyr138 functions as the Proton acceptor in the catalytic mechanism.

This sequence belongs to the short-chain dehydrogenases/reductases (SDR) family. Homodimer.

The catalysed reaction is 5,6,7,8-tetrahydropteridine + NAD(+) = 6,7-dihydropteridine + NADH + H(+). The enzyme catalyses 5,6,7,8-tetrahydropteridine + NADP(+) = 6,7-dihydropteridine + NADPH + H(+). In terms of biological role, the product of this enzyme, tetrahydrobiopterin (BH-4), is an essential cofactor for phenylalanine, tyrosine, and tryptophan hydroxylases. The sequence is that of Dihydropteridine reductase (qdpr) from Dictyostelium discoideum (Social amoeba).